A 562-amino-acid polypeptide reads, in one-letter code: NAD-dependent histone deacetylase SIR2 (562 aa).

The segment at 1–67 (MTIPHMKYAV…RETNTTDPLG (67 aa)) is disordered. Over residues 11–25 (SKTSENKVSNTVSPT) the composition is skewed to polar residues. Basic and acidic residues predominate over residues 26–36 (QDKDAIRKQPD). The Deacetylase sirtuin-type domain occupies 237 to 527 (RLSNFFTIDH…AMVAQKCGWT (291 aa)). NAD(+)-binding positions include 262 to 281 (GAGV…EGFY) and 344 to 347 (QNID). H364 acts as the Proton acceptor in catalysis. Residues C372, C375, C396, and C399 each contribute to the Zn(2+) site. Residues 471 to 473 (GTS), 496 to 498 (NRD), and C513 each bind NAD(+).

The protein belongs to the sirtuin family. Class I subfamily. In terms of assembly, homomultimer. Forms a complex with SIR3 and SIR4. Component of the RENT complex, at least composed of SIR2, CDC14 and NET1. The RENT complex interacts with FOB1. Interacts with ESC8. Interacts with and ZDS2. Interacts with MCM10. Interacts with SLX5. Interacts with NSI1. It depends on Zn(2+) as a cofactor.

It is found in the nucleus. Its subcellular location is the nucleolus. It carries out the reaction N(6)-acetyl-L-lysyl-[protein] + NAD(+) + H2O = 2''-O-acetyl-ADP-D-ribose + nicotinamide + L-lysyl-[protein]. Its activity is increased by calorie restriction, which slows the pace of aging and increases maximum lifespan. Activated by resveratrol (3,5,4'-trihydroxy-trans-stilbene), which is found in red wine. Functionally, NAD-dependent deacetylase, which participates in a wide range of cellular events including chromosome silencing, chromosome segregation, DNA recombination and the determination of life span. Involved in transcriptional repression of the silent mating-type loci HML and HMR and telomeric silencing via its association with SIR3 and SIR4. Plays a central role in ribosomal DNA (rDNA) silencing via its association with the RENT complex, preventing hyperrecombination, and repressing transcription from foreign promoters, which contributes to extending life span. Probably represses transcription via the formation of heterochromatin structure, which involves the compaction of chromatin fiber into a more condensed form, although this complex in at least one case can still bind euchromatic levels of positive transcription regulators. Although it displays some NAD-dependent histone deacetylase activity on histone H3K9Ac and H3K14Ac and histone H4K16Ac in vitro, such activity is unclear in vivo and may not be essential. This Saccharomyces cerevisiae (strain ATCC 204508 / S288c) (Baker's yeast) protein is NAD-dependent histone deacetylase SIR2 (SIR2).